The chain runs to 50 residues: Large ribosomal subunit protein eL39 (50 aa).

It belongs to the eukaryotic ribosomal protein eL39 family.

This chain is Large ribosomal subunit protein eL39, found in Methanosphaerula palustris (strain ATCC BAA-1556 / DSM 19958 / E1-9c).